A 373-amino-acid chain; its full sequence is Chaperone protein DnaJ (373 aa).

The J domain occupies 5–70; sequence CYYEVLEVSR…EKRSRYDRFG (66 aa). The segment at 134–212 adopts a CR-type zinc-finger fold; that stretch reads GTEVELNIPV…CRGAGYVRKQ (79 aa). 8 residues coordinate Zn(2+): Cys-147, Cys-150, Cys-164, Cys-167, Cys-186, Cys-189, Cys-200, and Cys-203. CXXCXGXG motif repeat units lie at residues 147–154, 164–171, 186–193, and 200–207; these read CDTCEGSG, CSHCGGRG, CPACNGRG, and CSECRGAG.

Belongs to the DnaJ family. As to quaternary structure, homodimer. It depends on Zn(2+) as a cofactor.

Its subcellular location is the cytoplasm. Its function is as follows. Participates actively in the response to hyperosmotic and heat shock by preventing the aggregation of stress-denatured proteins and by disaggregating proteins, also in an autonomous, DnaK-independent fashion. Unfolded proteins bind initially to DnaJ; upon interaction with the DnaJ-bound protein, DnaK hydrolyzes its bound ATP, resulting in the formation of a stable complex. GrpE releases ADP from DnaK; ATP binding to DnaK triggers the release of the substrate protein, thus completing the reaction cycle. Several rounds of ATP-dependent interactions between DnaJ, DnaK and GrpE are required for fully efficient folding. Also involved, together with DnaK and GrpE, in the DNA replication of plasmids through activation of initiation proteins. This Maridesulfovibrio salexigens (strain ATCC 14822 / DSM 2638 / NCIMB 8403 / VKM B-1763) (Desulfovibrio salexigens) protein is Chaperone protein DnaJ.